The following is a 303-amino-acid chain: Recombination-associated protein RdgC (303 aa).

This sequence belongs to the RdgC family.

It localises to the cytoplasm. It is found in the nucleoid. In terms of biological role, may be involved in recombination. The polypeptide is Recombination-associated protein RdgC (Shewanella frigidimarina (strain NCIMB 400)).